A 134-amino-acid chain; its full sequence is Large ribosomal subunit protein mL41 (134 aa).

The transit peptide at 1 to 13 directs the protein to the mitochondrion; the sequence is MGFLTAVTQGLVR.

Belongs to the mitochondrion-specific ribosomal protein mL41 family. As to quaternary structure, component of the mitochondrial ribosome large subunit (39S) which comprises a 16S rRNA and about 50 distinct proteins. Interacts with BCL2. Was also identified in the 28S mitochondrial ribosome.

Its subcellular location is the mitochondrion. Its function is as follows. Component of the mitochondrial ribosome large subunit. Also involved in apoptosis and cell cycle. Enhances p53/TP53 stability, thereby contributing to p53/TP53-induced apoptosis in response to growth-inhibitory condition. Enhances p53/TP53 translocation to the mitochondria. Has the ability to arrest the cell cycle at the G1 phase, possibly by stabilizing the CDKN1A and CDKN1B (p27Kip1) proteins. This Rattus norvegicus (Rat) protein is Large ribosomal subunit protein mL41 (Mrpl41).